The sequence spans 176 residues: Cytochrome b (176 aa).

Transmembrane regions (helical) follow at residues 33-53, 77-98, and 113-133; these read FGSLLGICLGLQILTGLFLAM, WVLRYLHANGASMFFICLYLHV, and WNMGVVLLFAVMATAFMGYVL. Heme b-binding residues include H83 and H97.

It belongs to the cytochrome b family. In terms of assembly, the cytochrome bc1 complex contains 11 subunits: 3 respiratory subunits (MT-CYB, CYC1 and UQCRFS1), 2 core proteins (UQCRC1 and UQCRC2) and 6 low-molecular weight proteins (UQCRH/QCR6, UQCRB/QCR7, UQCRQ/QCR8, UQCR10/QCR9, UQCR11/QCR10 and a cleavage product of UQCRFS1). This cytochrome bc1 complex then forms a dimer. Heme b serves as cofactor.

The protein localises to the mitochondrion inner membrane. In terms of biological role, component of the ubiquinol-cytochrome c reductase complex (complex III or cytochrome b-c1 complex) that is part of the mitochondrial respiratory chain. The b-c1 complex mediates electron transfer from ubiquinol to cytochrome c. Contributes to the generation of a proton gradient across the mitochondrial membrane that is then used for ATP synthesis. This Nycticeius humeralis (Evening bat) protein is Cytochrome b (MT-CYB).